Consider the following 225-residue polypeptide: PKHD-type hydroxylase YbiX (225 aa).

Residues Thr78–Ser177 enclose the Fe2OG dioxygenase domain. 3 residues coordinate Fe cation: His96, Asp98, and His158. Arg168 contributes to the 2-oxoglutarate binding site.

Requires Fe(2+) as cofactor. L-ascorbate is required as a cofactor.

The polypeptide is PKHD-type hydroxylase YbiX (Escherichia coli O8 (strain IAI1)).